The primary structure comprises 406 residues: ESX-5 secretion system protein EccE5 (406 aa).

Helical transmembrane passes span 9 to 29 (LALSWPRVTAVFLVDVLILAV) and 43 to 63 (VAWWVGVGVAAVVTLLSVVSY).

The protein belongs to the EccE family. Part of the ESX-5 / type VII secretion system (T7SS), which is composed of cytosolic and membrane components. The ESX-5 membrane complex is composed of EccB5, EccC5, EccD5 and EccE5.

The protein localises to the cell inner membrane. Functionally, part of the ESX-5 specialized secretion system, which is responsible for the secretion of EsxN and a number of PE_PGRS and PPE proteins, including PPE41. This chain is ESX-5 secretion system protein EccE5, found in Mycobacterium tuberculosis (strain ATCC 25618 / H37Rv).